We begin with the raw amino-acid sequence, 150 residues long: UPF0756 membrane protein CGSHiEE_06715 (150 aa).

A run of 4 helical transmembrane segments spans residues 1-21 (MTLQLNTIALLLVILLILGVL), 52-72 (YGVKIGIIILTIGVLSPLVSG), 81-101 (GFVSWKMALSISVGVLVAWLA), and 123-143 (IIGVAFLGGIPVGPLIAAGIL).

It belongs to the UPF0756 family.

Its subcellular location is the cell membrane. The polypeptide is UPF0756 membrane protein CGSHiEE_06715 (Haemophilus influenzae (strain PittEE)).